Consider the following 464-residue polypeptide: MSRTETDSIGPIEVPEDAYWGAQTQRSLINFAIGDQRMPLAVLHALTLIKKAAARVNDRNGDLPADIARLIEQAADEVLDGQHDAQFPLVVWQTGSGTQSNMNVNEVIAGRANELAGQGRGGKSPVHPNDHVNRSQSSNDCFPTAMHIATAQAVKEQLLPAIAELSSGLAEQAARHMKLVKTGRTHMMDATPITFGQELSGFVAQLDYAEKAIRAALPAVYELAQGGTAVGTGLNAPKGFAEAIAAELAALSGLPFVTAPNKFAALAGHEPLAALSGALKTLAGTLMKIANDLRLLGSGPRAGLAEVRLPANEPGSSIMPGKVNPTQCEALSMLACQVMGNDVTIGFAASQGHLQLNVYKPVIIHNVLQSIRLLADGCSNFNEHCVAGMEPDAEKMAEHLERGLMLVTALNPHIGYDKSAHIAKKAYTEGLTLREAALALGYLTDEEFDAWVRPDKMLEAGSNG.

Substrate is bound by residues 96 to 98 (SGT), 127 to 130 (HPND), 137 to 139 (SSN), and threonine 185. Residue histidine 186 is the Proton donor/acceptor of the active site. Serine 316 is an active-site residue. Residues serine 317 and 322-324 (KVN) contribute to the substrate site.

Belongs to the class-II fumarase/aspartase family. Fumarase subfamily. In terms of assembly, homotetramer.

The protein localises to the cytoplasm. It carries out the reaction (S)-malate = fumarate + H2O. It functions in the pathway carbohydrate metabolism; tricarboxylic acid cycle; (S)-malate from fumarate: step 1/1. Functionally, involved in the TCA cycle. Catalyzes the stereospecific interconversion of fumarate to L-malate. This Pseudomonas syringae pv. tomato (strain ATCC BAA-871 / DC3000) protein is Fumarate hydratase class II.